Reading from the N-terminus, the 347-residue chain is S-adenosylmethionine decarboxylase proenzyme 4 (347 aa).

Active-site residues include E7 and E10. Residue E66 participates in substrate binding. The active-site Schiff-base intermediate with substrate; via pyruvic acid is the S67. Residue S67 is modified to Pyruvic acid (Ser); by autocatalysis. C81 functions as the Proton donor; for catalytic activity in the catalytic mechanism. Residues S237 and H250 each act as proton acceptor; for processing activity in the active site. E254 lines the substrate pocket.

The protein belongs to the eukaryotic AdoMetDC family. It depends on pyruvate as a cofactor. Post-translationally, is synthesized initially as an inactive proenzyme. Formation of the active enzyme involves a self-maturation process in which the active site pyruvoyl group is generated from an internal serine residue via an autocatalytic post-translational modification. Two non-identical subunits are generated from the proenzyme in this reaction, and the pyruvate is formed at the N-terminus of the alpha chain, which is derived from the carboxyl end of the proenzyme. The post-translation cleavage follows an unusual pathway, termed non-hydrolytic serinolysis, in which the side chain hydroxyl group of the serine supplies its oxygen atom to form the C-terminus of the beta chain, while the remainder of the serine residue undergoes an oxidative deamination to produce ammonia and the pyruvoyl group blocking the N-terminus of the alpha chain.

It carries out the reaction S-adenosyl-L-methionine + H(+) = S-adenosyl 3-(methylsulfanyl)propylamine + CO2. Its pathway is amine and polyamine biosynthesis; S-adenosylmethioninamine biosynthesis; S-adenosylmethioninamine from S-adenosyl-L-methionine: step 1/1. Essential for biosynthesis of the polyamines spermidine and spermine. Essential for polyamine homeostasis, and normal plant embryogenesis, growth and development. The chain is S-adenosylmethionine decarboxylase proenzyme 4 from Arabidopsis thaliana (Mouse-ear cress).